The primary structure comprises 316 residues: Beta-lactamase 3 (316 aa).

Residues 1–29 (MFVLNKFFTNSHYKKIVPVVLLSCATLIG) form the signal peptide. The N-palmitoyl cysteine moiety is linked to residue cysteine 30. A lipid anchor (S-diacylglycerol cysteine) is attached at cysteine 30. The disordered stretch occupies residues 34–53 (NTQSESNKQTNQTNQVKQEN). Residues 40–50 (NKQTNQTNQVK) are compositionally biased toward low complexity. Serine 95 acts as the Acyl-ester intermediate in catalysis. The Proton acceptor role is filled by glutamate 191. A substrate-binding site is contributed by 257 to 259 (KTG).

Belongs to the class-A beta-lactamase family.

Its subcellular location is the cell membrane. The catalysed reaction is a beta-lactam + H2O = a substituted beta-amino acid. In Bacillus cereus, this protein is Beta-lactamase 3 (blaZ).